A 299-amino-acid polypeptide reads, in one-letter code: ATP phosphoribosyltransferase (299 aa).

The protein belongs to the ATP phosphoribosyltransferase family. Long subfamily. As to quaternary structure, equilibrium between an active dimeric form, an inactive hexameric form and higher aggregates. Interconversion between the various forms is largely reversible and is influenced by the natural substrates and inhibitors of the enzyme. Mg(2+) serves as cofactor.

The protein resides in the cytoplasm. It catalyses the reaction 1-(5-phospho-beta-D-ribosyl)-ATP + diphosphate = 5-phospho-alpha-D-ribose 1-diphosphate + ATP. Its pathway is amino-acid biosynthesis; L-histidine biosynthesis; L-histidine from 5-phospho-alpha-D-ribose 1-diphosphate: step 1/9. With respect to regulation, feedback inhibited by histidine. In terms of biological role, catalyzes the condensation of ATP and 5-phosphoribose 1-diphosphate to form N'-(5'-phosphoribosyl)-ATP (PR-ATP). Has a crucial role in the pathway because the rate of histidine biosynthesis seems to be controlled primarily by regulation of HisG enzymatic activity. The sequence is that of ATP phosphoribosyltransferase from Erwinia tasmaniensis (strain DSM 17950 / CFBP 7177 / CIP 109463 / NCPPB 4357 / Et1/99).